The sequence spans 466 residues: Asparagine--tRNA ligase (466 aa).

Belongs to the class-II aminoacyl-tRNA synthetase family. Homodimer.

The protein resides in the cytoplasm. The enzyme catalyses tRNA(Asn) + L-asparagine + ATP = L-asparaginyl-tRNA(Asn) + AMP + diphosphate + H(+). The protein is Asparagine--tRNA ligase of Photobacterium profundum (strain SS9).